Here is a 516-residue protein sequence, read N- to C-terminus: Apolipoprotein N-acyltransferase (516 aa).

The next 6 membrane-spanning stretches (helical) occupy residues 24 to 44, 58 to 78, 90 to 110, 125 to 145, 163 to 183, and 192 to 212; these read LAQA…LLYL, GWCY…ISIH, LLTL…AWLW, LAFA…LTGF, APLG…ALLV, and PPAL…GLAL. Residues 230-471 form the CN hydrolase domain; sequence VQGNVEQNLK…RAVLYGEVTP (242 aa). The active-site Proton acceptor is the glutamate 270. Lysine 331 is a catalytic residue. Cysteine 383 (nucleophile) is an active-site residue. The chain crosses the membrane as a helical span at residues 479 to 499; sequence LRWRAWPLAGLAVLLLGWALL.

Belongs to the CN hydrolase family. Apolipoprotein N-acyltransferase subfamily.

The protein localises to the cell inner membrane. The catalysed reaction is N-terminal S-1,2-diacyl-sn-glyceryl-L-cysteinyl-[lipoprotein] + a glycerophospholipid = N-acyl-S-1,2-diacyl-sn-glyceryl-L-cysteinyl-[lipoprotein] + a 2-acyl-sn-glycero-3-phospholipid + H(+). It participates in protein modification; lipoprotein biosynthesis (N-acyl transfer). In terms of biological role, catalyzes the phospholipid dependent N-acylation of the N-terminal cysteine of apolipoprotein, the last step in lipoprotein maturation. The sequence is that of Apolipoprotein N-acyltransferase from Azotobacter vinelandii (strain DJ / ATCC BAA-1303).